A 238-amino-acid polypeptide reads, in one-letter code: Ribonuclease PH (238 aa).

Phosphate-binding positions include arginine 86 and 124–126 (GTR).

The protein belongs to the RNase PH family. As to quaternary structure, homohexameric ring arranged as a trimer of dimers.

It catalyses the reaction tRNA(n+1) + phosphate = tRNA(n) + a ribonucleoside 5'-diphosphate. Its function is as follows. Phosphorolytic 3'-5' exoribonuclease that plays an important role in tRNA 3'-end maturation. Removes nucleotide residues following the 3'-CCA terminus of tRNAs; can also add nucleotides to the ends of RNA molecules by using nucleoside diphosphates as substrates, but this may not be physiologically important. Probably plays a role in initiation of 16S rRNA degradation (leading to ribosome degradation) during starvation. In Pasteurella multocida (strain Pm70), this protein is Ribonuclease PH.